The following is a 1214-amino-acid chain: Zinc finger E-box-binding homeobox 2 (1214 aa).

The interval 1-101 is disordered; the sequence is MKQPIMADGP…GVEHPWHNNE (101 aa). Residues 12 to 24 are compositionally biased toward basic residues; that stretch reads CKRRKQANPRRKN. Residues 57-74 show a composition bias toward polar residues; it reads DQETSPASVPNHESSPHV. Basic and acidic residues predominate over residues 89–98; sequence REGGVEHPWH. The residue at position 142 (serine 142) is a Phosphoserine. 3 consecutive C2H2-type zinc fingers follow at residues 211–234, 241–263, and 282–304; these read LTCP…KYRH, FSCP…MVTH, and FKCT…LRIH. The C2H2-type 4; atypical zinc-finger motif lies at 310-334; that stretch reads YECPNCKKRFSHSGSYSSHISSKKC. Serine 356, serine 360, and serine 364 each carry phosphoserine. Lysine 377 carries the N6-acetyllysine modification. A Glycyl lysine isopeptide (Lys-Gly) (interchain with G-Cter in SUMO); alternate cross-link involves residue lysine 391. Lysine 391 is covalently cross-linked (Glycyl lysine isopeptide (Lys-Gly) (interchain with G-Cter in SUMO2); alternate). The tract at residues 437-487 is SMAD-MH2 binding domain; it reads QHLGVGMEAPLLGFPTMNSNLSEVQKVLQIVDNTVSRQKMDCKAEEISKLK. Glycyl lysine isopeptide (Lys-Gly) (interchain with G-Cter in SUMO2) cross-links involve residues lysine 479 and lysine 555. Residues 581 to 605 form a C2H2-type 5; atypical zinc finger; it reads FSCQFCKESFPGPIPLHQHERYLCK. Glycyl lysine isopeptide (Lys-Gly) (interchain with G-Cter in SUMO2) cross-links involve residues lysine 611 and lysine 632. Residues 644 to 703 constitute a DNA-binding region (homeobox; atypical); the sequence is GMTSPINPYKDHMSVLKAYYAMNMEPNSDELLKISIAVGLPQEFVKEWFEQRKVYQYSNS. Phosphoserine is present on serine 647. Over residues 702–715 the composition is skewed to low complexity; sequence NSRSPSLERSSKPL. Disordered stretches follow at residues 702–740, 771–810, and 832–857; these read NSRS…DSIT, PVEK…SSEE, and ATKN…ENSD. Lysine 713 participates in a covalent cross-link: Glycyl lysine isopeptide (Lys-Gly) (interchain with G-Cter in SUMO2). Phosphoserine occurs at positions 731 and 780. Low complexity-rich tracts occupy residues 780–808 and 840–854; these read SNTP…SFSS and SSIS…SSSE. Threonine 782 bears the Phosphothreonine mark. Serine 784 carries the post-translational modification Phosphoserine. Lysine 866 is covalently cross-linked (Glycyl lysine isopeptide (Lys-Gly) (interchain with G-Cter in SUMO); alternate). Residue lysine 866 forms a Glycyl lysine isopeptide (Lys-Gly) (interchain with G-Cter in SUMO2); alternate linkage. 2 consecutive C2H2-type zinc fingers follow at residues 999–1021 and 1027–1049; these read YACD…KYEH and HQCQ…SRLH. A C2H2-type 8; atypical zinc finger spans residues 1055–1076; the sequence is YQCDKCGKRFSHSGSYSQHMNH. The segment at 1117 to 1214 is disordered; the sequence is TPQGYSDSEE…HEEDNMEDGM (98 aa). Phosphoserine occurs at positions 1122 and 1124. Over residues 1127–1155 the composition is skewed to basic and acidic residues; the sequence is RESMPRDGESEKEHEKEGEDGYGKLGRQD. Acidic residues predominate over residues 1156 to 1167; it reads GDEEFEEEEEES. Composition is skewed to basic and acidic residues over residues 1168 to 1179 and 1186 to 1205; these read ENKSMDTDPETI and GDHS…KSDH. Serine 1203 carries the post-translational modification Phosphoserine.

This sequence belongs to the delta-EF1/ZFH-1 C2H2-type zinc-finger family. Binds activated SMAD1, activated SMAD2 and activated SMAD3; binding with SMAD4 is not detected. Interacts with CBX4 and CTBP1. In terms of processing, sumoylation on Lys-391 and Lys-866 is promoted by the E3 SUMO-protein ligase CBX4, and impairs interaction with CTBP1 and transcription repression activity.

The protein localises to the nucleus. It localises to the chromosome. Its function is as follows. Transcriptional inhibitor that binds to DNA sequence 5'-CACCT-3' in different promoters. Represses transcription of E-cadherin. Represses expression of MEOX2. This is Zinc finger E-box-binding homeobox 2 from Homo sapiens (Human).